Here is a 207-residue protein sequence, read N- to C-terminus: Large ribosomal subunit protein uL4 (207 aa).

It belongs to the universal ribosomal protein uL4 family. Part of the 50S ribosomal subunit.

One of the primary rRNA binding proteins, this protein initially binds near the 5'-end of the 23S rRNA. It is important during the early stages of 50S assembly. It makes multiple contacts with different domains of the 23S rRNA in the assembled 50S subunit and ribosome. Functionally, forms part of the polypeptide exit tunnel. The polypeptide is Large ribosomal subunit protein uL4 (Rickettsia africae (strain ESF-5)).